Here is a 388-residue protein sequence, read N- to C-terminus: Myosin light chain kinase family member 4 (388 aa).

Residues 106–361 (VSKTEILGGG…ASEALKHPWL (256 aa)) enclose the Protein kinase domain. ATP is bound by residues 112 to 120 (LGGGRFGQV) and K135. D227 acts as the Proton acceptor in catalysis.

Belongs to the protein kinase superfamily. CAMK Ser/Thr protein kinase family.

The catalysed reaction is L-seryl-[protein] + ATP = O-phospho-L-seryl-[protein] + ADP + H(+). It catalyses the reaction L-threonyl-[protein] + ATP = O-phospho-L-threonyl-[protein] + ADP + H(+). This chain is Myosin light chain kinase family member 4 (MYLK4), found in Homo sapiens (Human).